We begin with the raw amino-acid sequence, 79 residues long: Acyl carrier protein (79 aa).

One can recognise a Carrier domain in the interval 1–77 (MNNVEKKIKK…KSIDYINNKN (77 aa)). Ser-37 carries the post-translational modification O-(pantetheine 4'-phosphoryl)serine.

It belongs to the acyl carrier protein (ACP) family. Post-translationally, 4'-phosphopantetheine is transferred from CoA to a specific serine of apo-ACP by AcpS. This modification is essential for activity because fatty acids are bound in thioester linkage to the sulfhydryl of the prosthetic group.

Its subcellular location is the cytoplasm. The protein operates within lipid metabolism; fatty acid biosynthesis. Carrier of the growing fatty acid chain in fatty acid biosynthesis. The polypeptide is Acyl carrier protein (Buchnera aphidicola subsp. Schizaphis graminum (strain Sg)).